The primary structure comprises 370 residues: Protein PELPK1 (370 aa).

The signal sequence occupies residues 1 to 34; sequence MALMKKSLSAALLSSPLLIICLIALLADPFSVGA. 52 tandem repeats follow at residues 43–47, 49–53, 54–58, 60–64, 65–69, 71–75, 76–80, 82–86, 87–91, 93–97, 98–102, 104–108, 109–113, 115–119, 120–124, 126–130, 131–135, 137–141, 142–146, 148–152, 153–157, 159–163, 164–168, 175–179, 186–190, 192–196, 197–201, 203–207, 214–218, 219–223, 225–229, 231–235, 236–240, 242–246, 247–251, 253–257, 258–262, 264–268, 270–274, 275–279, 281–285, 286–290, 292–296, 303–307, 314–318, 319–323, 325–329, 330–334, 336–340, 344–348, 355–359, and 361–365. The interval 43–365 is 52 X 5 AA tandem repeat of P-[DEGQ]-[AEFLIV]-[QPT]-K; it reads PEIPKLPELP…QLPKLPEFPK (323 aa). The span at 65–223 shows a compositional bias: basic and acidic residues; the sequence is PELPKLPEFP…PEIQKPELPK (159 aa). The segment at 65–370 is disordered; the sequence is PELPKLPEFP…PEFPKVPGTP (306 aa). Positions 232-262 are enriched in basic and acidic residues; sequence EIQKPELPKLPEVPKLEAPKVPEIQKPELPK. Composition is skewed to basic and acidic residues over residues 271–296 and 306–334; these read EIQK…EVPK and PKSE…ELPK.

It localises to the secreted. The protein resides in the cell wall. Functionally, positive regulator of germination and plant growth. This is Protein PELPK1 from Arabidopsis thaliana (Mouse-ear cress).